The sequence spans 290 residues: Probable lipid hydrolase 463L (290 aa).

2 helical membrane-spanning segments follow: residues 26–46 (TLVL…LNGL) and 53–73 (ISTF…SIGY). One can recognise a PNPLA domain in the interval 27–207 (LVLSGGAMRG…WNNFPIDIAI (181 aa)). Residues 58 to 62 (GISSG) carry the GXSXG motif. S60 serves as the catalytic Nucleophile. D194 functions as the Proton acceptor in the catalytic mechanism. The DGA/G motif lies at 194–196 (DGG).

It is found in the membrane. In terms of biological role, probable lipid hydrolase. In Invertebrate iridescent virus 6 (IIV-6), this protein is Probable lipid hydrolase 463L.